The following is a 101-amino-acid chain: Small ribosomal subunit protein uS14 (101 aa).

Belongs to the universal ribosomal protein uS14 family. In terms of assembly, part of the 30S ribosomal subunit. Contacts proteins S3 and S10.

Binds 16S rRNA, required for the assembly of 30S particles and may also be responsible for determining the conformation of the 16S rRNA at the A site. The sequence is that of Small ribosomal subunit protein uS14 from Pseudomonas syringae pv. syringae (strain B728a).